The primary structure comprises 458 residues: Tyrosine phenol-lyase (458 aa).

Lysine 258 carries the post-translational modification N6-(pyridoxal phosphate)lysine.

This sequence belongs to the beta-eliminating lyase family. As to quaternary structure, homotetramer. Requires pyridoxal 5'-phosphate as cofactor.

The enzyme catalyses L-tyrosine + H2O = phenol + pyruvate + NH4(+). The protein is Tyrosine phenol-lyase (tpl) of Pasteurella multocida (strain Pm70).